The chain runs to 427 residues: D-inositol 3-phosphate glycosyltransferase (427 aa).

A 1D-myo-inositol 3-phosphate-binding site is contributed by His12. Residues 18–19 and Gly26 each bind UDP-N-acetyl-alpha-D-glucosamine; that span reads QP. 1D-myo-inositol 3-phosphate is bound by residues 23 to 28, Lys81, Tyr113, Thr137, and Arg157; that span reads DAGGMN. Residues Arg234, Lys239, and Arg297 each contribute to the UDP-N-acetyl-alpha-D-glucosamine site. 3 residues coordinate Mg(2+): Tyr306, Gln307, and Ala309. UDP-N-acetyl-alpha-D-glucosamine contacts are provided by Glu319 and Glu327. Thr333 lines the Mg(2+) pocket.

The protein belongs to the glycosyltransferase group 1 family. MshA subfamily. In terms of assembly, homodimer.

The enzyme catalyses 1D-myo-inositol 3-phosphate + UDP-N-acetyl-alpha-D-glucosamine = 1D-myo-inositol 2-acetamido-2-deoxy-alpha-D-glucopyranoside 3-phosphate + UDP + H(+). In terms of biological role, catalyzes the transfer of a N-acetyl-glucosamine moiety to 1D-myo-inositol 3-phosphate to produce 1D-myo-inositol 2-acetamido-2-deoxy-glucopyranoside 3-phosphate in the mycothiol biosynthesis pathway. This is D-inositol 3-phosphate glycosyltransferase from Corynebacterium diphtheriae (strain ATCC 700971 / NCTC 13129 / Biotype gravis).